Reading from the N-terminus, the 1129-residue chain is Serine/threonine-protein kinase LATS1 (1129 aa).

Positions 1–11 (MKRGEKPEGYR) are enriched in basic and acidic residues. The interval 1 to 71 (MKRGEKPEGY…PRQVRNPPKF (71 aa)) is disordered. Residues 19-30 (PASNYPGSSRQM) show a composition bias toward polar residues. Residues 46–64 (DASKAEHNLNKMSTEDPRQ) show a composition bias toward basic and acidic residues. The UBA domain occupies 100–141 (EVNPQMFQDLQAAGFDEDMVIQALQKTNNRSIEAAVEFISKM). Disordered stretches follow at residues 148 to 216 (REQM…RPLS) and 228 to 276 (PSNG…QTKR). Positions 235–268 (NPPPPPQVRSVTPPPPPRGQTPPPRGTTPPPPSW) are enriched in pro residues. Position 246 is a phosphothreonine (Thr246). Residue Ser278 is modified to Phosphoserine. 4 disordered regions span residues 292 to 317 (PPGAWQEGYPPPPLTTSPMNPPSQAQ), 363 to 407 (PTGS…VPQS), 432 to 492 (WPQS…TPAP), and 513 to 630 (PTHP…ESRI). The segment covering 300–312 (YPPPPLTTSPMNP) has biased composition (pro residues). The PPxY motif 1 signature appears at 372-375 (PPPY). Polar residues predominate over residues 380-392 (ANGQSPSALQTGA). A compositionally biased stretch (low complexity) spans 433–445 (PQSSSAPAQSSPS). Residues 453-481 (WQPNIPVRSNSFNNPLGSRASHSANSQPS) show a composition bias toward polar residues. Ser463 carries the phosphoserine; by NUAK1 and NUAK2 modification. 2 stretches are compositionally biased toward low complexity: residues 482-492 (ATTVTAITPAP) and 520-530 (PQPVQTVQPTP). The segment at 525-654 (TVQPTPFSEG…HVENVLKSHQ (130 aa)) is interaction with YAP1. Positions 555 to 558 (PPPY) match the PPxY motif 2 motif. The segment covering 578 to 608 (PCKDEQPSLPKEDDSEKSADSGDSGDKEKKQ) has biased composition (basic and acidic residues). Phosphoserine is present on Ser612. Positions 620–629 (KKDEERRESR) are enriched in basic and acidic residues. Residue Ser673 is modified to Phosphoserine. Residues 704–1009 (FVKIKTLGIG…ADEIKAHPFF (306 aa)) form the Protein kinase domain. Residues 710-718 (LGIGAFGEV) and Lys733 contribute to the ATP site. Catalysis depends on Asp827, which acts as the Proton acceptor. Residue Ser908 is modified to Phosphoserine; by STK3/MST2. The 80-residue stretch at 1010 to 1089 (KTIDFSSDLR…RRFFDDNGYP (80 aa)) folds into the AGC-kinase C-terminal domain. Thr1078 carries the phosphothreonine; by STK3/MST2 modification. The segment at 1104-1129 (QGSEQQSDEDDQHTSSDGNNRDLVYV) is disordered.

The protein belongs to the protein kinase superfamily. AGC Ser/Thr protein kinase family. Complexes with CDK1 in early mitosis. LATS1-associated CDK1 has no mitotic cyclin partner and no apparent kinase activity. Binds phosphorylated ZYX, locating this protein to the mitotic spindle and suggesting a role for actin regulatory proteins during mitosis. Binds to and colocalizes with LIMK1 at the actomyosin contractile ring during cytokinesis. Interacts (via PPxY motif 2) with YAP1 (via WW domains). Interacts with MOB1A and MOB1B. Interacts with LIMD1, WTIP and AJUBA. Interacts with ESR1, DCAF1 and DCAF13; probably recruits DCAF1 and DCAF13 to ESR1 to promote ESR1 ubiquitination and ubiquitin-mediated proteasomal degradation. Interacts with STK3/MST2; this interaction is inhibited in the presence of DLG5. Interacts with SCRIB in the presence of DLG5. Interacts with WWTR1/TAZ. Interacts with WWC1, WWC2 and WWC3 (via their WW domains). The cofactor is Mg(2+). Autophosphorylated and phosphorylated during M-phase of the cell cycle. Phosphorylated by STK3/MST2 at Ser-908 and Thr-1078, which results in its activation. Phosphorylated by MAP4Ks; in parallel to STK3/MST2 and resulting to its activation. Phosphorylation at Ser-463 by NUAK1 and NUAK2 leads to decreased protein level and is required to regulate cellular senescence and cellular ploidy.

It localises to the cytoplasm. The protein localises to the cytoskeleton. Its subcellular location is the microtubule organizing center. It is found in the centrosome. The protein resides in the spindle. It localises to the midbody. The protein localises to the spindle pole body. The catalysed reaction is L-seryl-[protein] + ATP = O-phospho-L-seryl-[protein] + ADP + H(+). The enzyme catalyses L-threonyl-[protein] + ATP = O-phospho-L-threonyl-[protein] + ADP + H(+). Negative regulator of YAP1 in the Hippo signaling pathway that plays a pivotal role in organ size control and tumor suppression by restricting proliferation and promoting apoptosis. The core of this pathway is composed of a kinase cascade wherein STK3/MST2 and STK4/MST1, in complex with its regulatory protein SAV1, phosphorylates and activates LATS1/2 in complex with its regulatory protein MOB1, which in turn phosphorylates and inactivates YAP1 oncoprotein and WWTR1/TAZ. Phosphorylation of YAP1 by LATS1 inhibits its translocation into the nucleus to regulate cellular genes important for cell proliferation, cell death, and cell migration. Acts as a tumor suppressor which plays a critical role in maintenance of ploidy through its actions in both mitotic progression and the G1 tetraploidy checkpoint. Negatively regulates G2/M transition by down-regulating CDK1 kinase activity. Involved in the control of p53 expression. Affects cytokinesis by regulating actin polymerization through negative modulation of LIMK1. May also play a role in endocrine function. Plays a role in mammary gland epithelial cell differentiation, both through the Hippo signaling pathway and the intracellular estrogen receptor signaling pathway by promoting the degradation of ESR1. Acts as an activator of the NLRP3 inflammasome by mediating phosphorylation of 'Ser-265' of NLRP3 following NLRP3 palmitoylation, promoting NLRP3 activation by NEK7. The sequence is that of Serine/threonine-protein kinase LATS1 from Mus musculus (Mouse).